The chain runs to 341 residues: UPF0283 membrane protein HD_1769 (341 aa).

3 helical membrane-spanning segments follow: residues 57–77 (LLAV…QCLI), 86–106 (IDLA…GAII), and 204–224 (ENAI…MIAW).

The protein belongs to the UPF0283 family.

The protein resides in the cell inner membrane. This is UPF0283 membrane protein HD_1769 from Haemophilus ducreyi (strain 35000HP / ATCC 700724).